A 569-amino-acid polypeptide reads, in one-letter code: S-(+)-linalool synthase, chloroplastic (569 aa).

A chloroplast-targeting transit peptide spans 1 to 39; the sequence is MALIATKISSRSCFVSAYPNNSPTFLISKFPNTVDSLSP. Arg-294, Asp-331, Asp-335, Arg-472, and Asp-475 together coordinate (2E)-geranyl diphosphate. Mg(2+)-binding residues include Asp-331 and Asp-335. A DDXXD motif motif is present at residues 331–335; the sequence is DDIFD. Mg(2+) is bound by residues Asp-475, Ser-479, and Glu-483.

This sequence belongs to the terpene synthase family. Tpsb subfamily. The cofactor is Mg(2+). Mn(2+) serves as cofactor. In terms of tissue distribution, predominantly expressed in flowers but also in stems and siliques.

It localises to the plastid. It is found in the chloroplast. It carries out the reaction (2E)-geranyl diphosphate + H2O = (S)-linalool + diphosphate. It participates in secondary metabolite biosynthesis; terpenoid biosynthesis. Its function is as follows. Involved in monoterpene (C10) biosynthesis. The major product is (S)-linalool. The polypeptide is S-(+)-linalool synthase, chloroplastic (Arabidopsis thaliana (Mouse-ear cress)).